A 247-amino-acid chain; its full sequence is Adenosylcobinamide-GDP ribazoletransferase (247 aa).

6 consecutive transmembrane segments (helical) span residues 31-51 (ILFYPLVGLIIGGILFLVTCI), 55-75 (LPALLLAAIVLALWIWLTGGL), 109-129 (IGVLSLVIICLLKFALVYVLI), 135-155 (LFLICIPILGRVVPSILFLTT), 183-203 (VLLLPLYWGWQGLIAIIGFLI), and 227-247 (AIEIGETVLMFTFVVSYFYLV).

It belongs to the CobS family. Mg(2+) is required as a cofactor.

The protein resides in the cell inner membrane. It catalyses the reaction alpha-ribazole + adenosylcob(III)inamide-GDP = adenosylcob(III)alamin + GMP + H(+). It carries out the reaction alpha-ribazole 5'-phosphate + adenosylcob(III)inamide-GDP = adenosylcob(III)alamin 5'-phosphate + GMP + H(+). Its pathway is cofactor biosynthesis; adenosylcobalamin biosynthesis; adenosylcobalamin from cob(II)yrinate a,c-diamide: step 7/7. In terms of biological role, joins adenosylcobinamide-GDP and alpha-ribazole to generate adenosylcobalamin (Ado-cobalamin). Also synthesizes adenosylcobalamin 5'-phosphate from adenosylcobinamide-GDP and alpha-ribazole 5'-phosphate. This chain is Adenosylcobinamide-GDP ribazoletransferase, found in Acinetobacter baumannii (strain ATCC 17978 / DSM 105126 / CIP 53.77 / LMG 1025 / NCDC KC755 / 5377).